A 707-amino-acid chain; its full sequence is Elongation factor G (707 aa).

The region spanning 8–290 (ERYRNIGICA…AVIEYLPSPT (283 aa)) is the tr-type G domain. GTP-binding positions include 17–24 (AHVDAGKT), 88–92 (DTPGH), and 142–145 (NKMD).

This sequence belongs to the TRAFAC class translation factor GTPase superfamily. Classic translation factor GTPase family. EF-G/EF-2 subfamily.

It is found in the cytoplasm. In terms of biological role, catalyzes the GTP-dependent ribosomal translocation step during translation elongation. During this step, the ribosome changes from the pre-translocational (PRE) to the post-translocational (POST) state as the newly formed A-site-bound peptidyl-tRNA and P-site-bound deacylated tRNA move to the P and E sites, respectively. Catalyzes the coordinated movement of the two tRNA molecules, the mRNA and conformational changes in the ribosome. In Idiomarina loihiensis (strain ATCC BAA-735 / DSM 15497 / L2-TR), this protein is Elongation factor G.